A 157-amino-acid polypeptide reads, in one-letter code: Putative tRNA (cytidine(34)-2'-O)-methyltransferase (157 aa).

S-adenosyl-L-methionine-binding residues include Ile-79, Gly-104, and Ile-125.

This sequence belongs to the class IV-like SAM-binding methyltransferase superfamily. RNA methyltransferase TrmH family. TrmL subfamily.

The protein resides in the cytoplasm. The enzyme catalyses cytidine(34) in tRNA + S-adenosyl-L-methionine = 2'-O-methylcytidine(34) in tRNA + S-adenosyl-L-homocysteine + H(+). It carries out the reaction 5-carboxymethylaminomethyluridine(34) in tRNA(Leu) + S-adenosyl-L-methionine = 5-carboxymethylaminomethyl-2'-O-methyluridine(34) in tRNA(Leu) + S-adenosyl-L-homocysteine + H(+). Could methylate the ribose at the nucleotide 34 wobble position in tRNA. The chain is Putative tRNA (cytidine(34)-2'-O)-methyltransferase from Geobacillus stearothermophilus (Bacillus stearothermophilus).